The following is an 86-amino-acid chain: Large ribosomal subunit protein bL27 (86 aa).

The segment at 1-26 (MATKKAGGSSRNGRDSAGRRLGVKKS) is disordered.

The protein belongs to the bacterial ribosomal protein bL27 family.

The sequence is that of Large ribosomal subunit protein bL27 from Rickettsia prowazekii (strain Madrid E).